Reading from the N-terminus, the 253-residue chain is Core protein VP8 (253 aa).

A propeptide spanning residues 1 to 31 (MNDLLLENLFGEKALCAQVTRDQLLEIIAAG) is cleaved from the precursor.

Belongs to the chordopoxvirinae VP8 family. In terms of processing, undergoes morphogenesis-associated proteolysis which cleaves the 28 kDa to a 25-kDa product. Proteolytic cleavage of major core proteins P4a (A10L), P4b (A3L), and VP8 (L4R), which occurs at a late stage of core formation, is required for production of infectious mature virions (MV).

It localises to the virion. In terms of biological role, major core structural protein. The polypeptide is Core protein VP8 (Vertebrata (FPV)).